Consider the following 299-residue polypeptide: Acetylglutamate kinase (299 aa).

Substrate is bound by residues 72–73 (GG), R94, and N196.

This sequence belongs to the acetylglutamate kinase family. ArgB subfamily.

It is found in the cytoplasm. It carries out the reaction N-acetyl-L-glutamate + ATP = N-acetyl-L-glutamyl 5-phosphate + ADP. The protein operates within amino-acid biosynthesis; L-arginine biosynthesis; N(2)-acetyl-L-ornithine from L-glutamate: step 2/4. Its function is as follows. Catalyzes the ATP-dependent phosphorylation of N-acetyl-L-glutamate. This Burkholderia vietnamiensis (strain G4 / LMG 22486) (Burkholderia cepacia (strain R1808)) protein is Acetylglutamate kinase.